Consider the following 780-residue polypeptide: Gelsolin (780 aa).

The signal sequence occupies residues 1–25 (MAPYCSSLRSALLVLALCALSPSHA). A disordered region spans residues 28–48 (ASRGRAQERAPQSRVSETRPS). An actin-severing region spans residues 51–174 (VVEHPEFLKA…YKKGGVASGF (124 aa)). The stretch at 74-155 (FDLVPVPPNL…EVQGFESSTF (82 aa)) is one Gelsolin-like 1 repeat. Tyrosine 84 is subject to Phosphotyrosine. Residues glycine 90, aspartate 91, glutamate 122, aspartate 134, glycine 139, and alanine 141 each coordinate Ca(2+). Positions 121-124 (DESG) are actin-actin interfilament contact point. Position 160 to 167 (160 to 167 (KSGLKYKK)) interacts with a 1,2-diacyl-sn-glycero-3-phospho-(1D-myo-inositol-4,5-bisphosphate). A Ca(2+)-binding site is contributed by valine 170. Residue 186-194 (RLFQVKGRR) coordinates a 1,2-diacyl-sn-glycero-3-phospho-(1D-myo-inositol-4,5-bisphosphate). One copy of the Gelsolin-like 2 repeat lies at 196 to 268 (VRATEVPVSW…SEEGSEPEAM (73 aa)). Ca(2+) contacts are provided by glycine 211 and aspartate 212. A disulfide bridge links cysteine 213 with cysteine 226. Ca(2+) contacts are provided by glutamate 234, aspartate 284, glutamate 327, aspartate 328, and glutamate 352. Positions 244-286 (GIRDNERSGRAQVHVSEEGSEPEAMLQVLGPKPDLPQGTEDTA) are disordered. A Gelsolin-like 3 repeat occupies 315–387 (DENPFAQSAL…LPEGGETPLF (73 aa)). Residues tyrosine 407 and tyrosine 463 each carry the phosphotyrosine modification. The interval 432–780 (AAQHGMDDDG…LDRALAELAA (349 aa)) is actin-binding, Ca-sensitive. One copy of the Gelsolin-like 4 repeat lies at 453 to 534 (SNKVLVDPAT…VQGKEPAHLM (82 aa)). Ca(2+) is bound by residues glycine 469, aspartate 470, glutamate 500, aspartate 512, glycine 517, proline 519, and threonine 549. A Gelsolin-like 5 repeat occupies 576-640 (AVEVMPKAGA…EEGSEPDGFW (65 aa)). Lysine 582 is subject to N6-acetyllysine. 2 residues coordinate Ca(2+): asparagine 589 and aspartate 590. Tyrosine 601 is subject to Phosphotyrosine. Ca(2+) is bound at residue glutamate 612. Tyrosine 649 is modified (phosphotyrosine). The stretch at 679 to 754 (IEEVPGELMQ…VRQGFEPPSF (76 aa)) is one Gelsolin-like 6 repeat. The Ca(2+) site is built by aspartate 694, aspartate 695, and glutamate 717. Phosphothreonine is present on threonine 740.

The protein belongs to the villin/gelsolin family. As to quaternary structure, binds to actin and to fibronectin. Identified in a complex composed of ACTA1, COBL, GSN and TMSB4X. Interacts with the inactive form of EIF2AK2/PKR. Interacts with FLII. Post-translationally, phosphorylated on tyrosine residues in vitro.

Its subcellular location is the secreted. The protein localises to the cytoplasm. The protein resides in the cytoskeleton. Its function is as follows. Calcium-regulated, actin-modulating protein that binds to the plus (or barbed) ends of actin monomers or filaments, preventing monomer exchange (end-blocking or capping). It can promote the assembly of monomers into filaments (nucleation) as well as sever filaments already formed. Plays a role in ciliogenesis. The chain is Gelsolin (Gsn) from Rattus norvegicus (Rat).